Here is a 105-residue protein sequence, read N- to C-terminus: MFRWRKGKCRGRKLRDIYISGLPAVRAMIPEPGTGKKPVAINLAEAEALRLVDYEEMSFDDAAAKMGVSKATVWRLVNAARKKMAKAVFEGRAILITKGGELERL.

It belongs to the UPF0251 family.

The polypeptide is UPF0251 protein AF_0666 (Archaeoglobus fulgidus (strain ATCC 49558 / DSM 4304 / JCM 9628 / NBRC 100126 / VC-16)).